The chain runs to 102 residues: Putative UPF0320 protein YMR326C (102 aa).

This sequence belongs to the UPF0320 family.

This Saccharomyces cerevisiae (strain ATCC 204508 / S288c) (Baker's yeast) protein is Putative UPF0320 protein YMR326C.